The primary structure comprises 379 residues: MTISDVPTQTLPAEGEVRLVDIGSLRLESGAVIDNVCIALQRWGELSPTRDNVVMVLHALTGDSHVTGPAGPGHSTPGWWDGMVGPGAPIDTNRWCAVATNVLGGCRGSTGPSSLARDGKPWGSRFPLISVRDQVEADMAALAALGITQVAAVVGGSMGGARALEWIVGHPDRVRSALLLAVGARATADQIGTQTTQIAAIKADPNWRNGDYHETGCKPEAGLKVARRFAHLTYRGEIELDSRFANDGQGGEDPADGGRYAIQSYLEHQGDKLLARFDAGSYVILTEALNRHDVGRGRDGIHAALRGCPVPVVVGGITSDRLYPLRLQQELADLLPGCAGLEVVDSIRGHDGFLVESEAVGELIHKTLRLAEDRSSRPW.

In terms of domain architecture, AB hydrolase-1 spans 52–356 (NVVMVLHALT…IRGHDGFLVE (305 aa)). The active-site Nucleophile is Ser157. Residue Arg227 coordinates substrate. Residues Asp320 and His350 contribute to the active site. Substrate is bound at residue Asp351.

The protein belongs to the AB hydrolase superfamily. MetX family. Homodimer.

Its subcellular location is the cytoplasm. It catalyses the reaction L-homoserine + acetyl-CoA = O-acetyl-L-homoserine + CoA. The protein operates within amino-acid biosynthesis; L-methionine biosynthesis via de novo pathway; O-acetyl-L-homoserine from L-homoserine: step 1/1. In terms of biological role, transfers an acetyl group from acetyl-CoA to L-homoserine, forming acetyl-L-homoserine. This is Homoserine O-acetyltransferase from Mycobacterium marinum (strain ATCC BAA-535 / M).